A 117-amino-acid polypeptide reads, in one-letter code: UPF0102 protein RSKD131_0118 (117 aa).

It belongs to the UPF0102 family.

The sequence is that of UPF0102 protein RSKD131_0118 from Cereibacter sphaeroides (strain KD131 / KCTC 12085) (Rhodobacter sphaeroides).